The chain runs to 468 residues: MSQPTTLYDKIWNDHLVHEAEDGTCLIYIDRHLVHEVTSPQAFEGLRVAGRKVHAPEKTLAVVDHNVPTTDRSKPNPDPESAEQIAALAQNARDFGIEYYNEFDKRQGIVHVIGPEQGFTLPGTTIVCGDSHTSTHGAFGALAHGIGTSEVEHVLATQTLIQKKAKNMRAVVDGKLPDGVTAKDIILAIIGEIGTAGGTGYVLEYAGEAIRALSMEGRMTVCNMSIEGGARAGLIAPDETAYEFLKGRPKAPKGADWDAALRYWETLRSDDGAHFDHEIRLDAAKLPPIVTWGTSPEDVIAVTGKVPDPAAIEDEAKRLSKERALHYMGLLPGTKITDIRLDRVFIGSCTNGRIEDLRAAAKIAEGRTVNGNVSAMVVPGSGLVKEQAEAEGLDKIFTRAGFEWREPGCSMCLAMNPDKLKPDERCASTSNRNFEGRQGFKGRTHLVSPSMAAAAAIAGHFVDIREWR.

[4Fe-4S] cluster contacts are provided by C349, C409, and C412.

This sequence belongs to the aconitase/IPM isomerase family. LeuC type 1 subfamily. Heterodimer of LeuC and LeuD. [4Fe-4S] cluster serves as cofactor.

It catalyses the reaction (2R,3S)-3-isopropylmalate = (2S)-2-isopropylmalate. Its pathway is amino-acid biosynthesis; L-leucine biosynthesis; L-leucine from 3-methyl-2-oxobutanoate: step 2/4. Its function is as follows. Catalyzes the isomerization between 2-isopropylmalate and 3-isopropylmalate, via the formation of 2-isopropylmaleate. The chain is 3-isopropylmalate dehydratase large subunit from Nitrobacter winogradskyi (strain ATCC 25391 / DSM 10237 / CIP 104748 / NCIMB 11846 / Nb-255).